Reading from the N-terminus, the 319-residue chain is MATVEVLTSEVVAPAEETPAGAVWLSNLDLAARRGYTPTVYFYRRNGDDEAAFFAADAVRDGLARALVPFYPLAGRLGLAGGGEDGRVQIDCTGEGAVFVTARSGHYALDDLMNEFVPCDEMRDLFVPPTPPPNPPCALLLVQVTHLRCGGVVLGMALHHSVVDARSAAHFAETWASIVRGAPAGDAPVPPCFDHKLLAARPARAVLYDHPEYKPEPAPAPAHAATASTYASAIITLTKQQVGALKAACAGASTFRAVVALVWQCACRARSLPPDKANLFLLYKYISEDWVDIQLNIQQRDNCIYAPTLKANCCFTPTF.

Catalysis depends on proton acceptor residues His-160 and Asp-301.

This sequence belongs to the plant acyltransferase family.

Its function is as follows. Hydroxycinnamoyl transferase that catalyzes the transfer of an acyl from p-coumaryol-CoA to putrescine, to produce coumaroyl putrescine. The polypeptide is Putrescine hydroxycinnamoyltransferase 2 (Oryza sativa subsp. japonica (Rice)).